A 431-amino-acid polypeptide reads, in one-letter code: Serine--tRNA ligase (431 aa).

T238–E240 lines the L-serine pocket. R269–E271 contacts ATP. Residue E292 coordinates L-serine. E356 to S359 lines the ATP pocket. Position 391 (S391) interacts with L-serine.

Belongs to the class-II aminoacyl-tRNA synthetase family. Type-1 seryl-tRNA synthetase subfamily. As to quaternary structure, homodimer. The tRNA molecule binds across the dimer.

It is found in the cytoplasm. It catalyses the reaction tRNA(Ser) + L-serine + ATP = L-seryl-tRNA(Ser) + AMP + diphosphate + H(+). It carries out the reaction tRNA(Sec) + L-serine + ATP = L-seryl-tRNA(Sec) + AMP + diphosphate + H(+). It functions in the pathway aminoacyl-tRNA biosynthesis; selenocysteinyl-tRNA(Sec) biosynthesis; L-seryl-tRNA(Sec) from L-serine and tRNA(Sec): step 1/1. In terms of biological role, catalyzes the attachment of serine to tRNA(Ser). Is also able to aminoacylate tRNA(Sec) with serine, to form the misacylated tRNA L-seryl-tRNA(Sec), which will be further converted into selenocysteinyl-tRNA(Sec). This chain is Serine--tRNA ligase, found in Leptothrix cholodnii (strain ATCC 51168 / LMG 8142 / SP-6) (Leptothrix discophora (strain SP-6)).